A 483-amino-acid chain; its full sequence is MVSSTKLKSVDFYRKIPRDLTEASLSGAGLSIVAALFMMFLFGMELSSYLEVNTTTAVIVDKSSDGDFLRIDFNISFPALSCEFASVDVSDVLGTNRLNITKTVRKFPIDPHLRSTGAEFHSGLALHNINHGEETKEEFPDGAIPLTSASFEALSHHFPILVVNFNAPWCYWSNRLKPSWEKAANIIKQRYDPEADGRVLLGNVDCTEEPALCKRNHIQGYPSIRIFRKGSDLREDHGHHEHESYYGDRDTDSIVKMVEGLVAPIHPETHKVALDGKSNDTVKHLKKGPVTGGCRVEGYVRVKKVPGNLVISAHSGAHSFDSSQMNMSHVVSHFSFGRMISPRLLTDMKRLLPYLGLSHDRLDGKAFINQHEFGANVTIEHYLQTVKTEVITRRSGQEHSLIEEYEYTAHSSVAQTYYLPVAKFHFELSPMQILITENPKSFSHFITNLCAIIGGVFTVAGILDSIFHNTVRLVKKVELGKNI.

N-linked (GlcNAc...) asparagine glycans are attached at residues Asn-53, Asn-74, and Asn-99. Positions 133 to 263 constitute a Thioredoxin domain; that stretch reads EETKEEFPDG…IVKMVEGLVA (131 aa). Cys-170 (nucleophile) is an active-site residue. N-linked (GlcNAc...) asparagine glycosylation is found at Asn-279, Asn-326, and Asn-376. A helical membrane pass occupies residues 442-462; that stretch reads FSHFITNLCAIIGGVFTVAGI.

Belongs to the protein disulfide isomerase family. In terms of tissue distribution, widely expressed.

Its subcellular location is the membrane. In terms of biological role, acts as a protein-folding catalyst that interacts with nascent polypeptides to catalyze the formation, isomerization, and reduction or oxidation of disulfide bonds. The sequence is that of Protein disulfide-isomerase 5-3 (PDIL5-3) from Arabidopsis thaliana (Mouse-ear cress).